The primary structure comprises 121 residues: Small ribosomal subunit protein uS13 (121 aa).

The segment at 94 to 121 is disordered; it reads SLPVRGQNTKNNSRTRKGPRRTVANKKK. Basic residues predominate over residues 106 to 121; sequence SRTRKGPRRTVANKKK.

This sequence belongs to the universal ribosomal protein uS13 family. In terms of assembly, part of the 30S ribosomal subunit. Forms a loose heterodimer with protein S19. Forms two bridges to the 50S subunit in the 70S ribosome.

Its function is as follows. Located at the top of the head of the 30S subunit, it contacts several helices of the 16S rRNA. In the 70S ribosome it contacts the 23S rRNA (bridge B1a) and protein L5 of the 50S subunit (bridge B1b), connecting the 2 subunits; these bridges are implicated in subunit movement. Contacts the tRNAs in the A and P-sites. The polypeptide is Small ribosomal subunit protein uS13 (Exiguobacterium sp. (strain ATCC BAA-1283 / AT1b)).